The sequence spans 237 residues: Cyclic-di-GMP-binding biofilm dispersal mediator protein (237 aa).

10–34 (LILGGSRGIGAAIVRRFVTDGANVR) is an NAD(+) binding site. Substrate is bound at residue Ser132. Tyr146 serves as the catalytic Proton acceptor.

Belongs to the short-chain dehydrogenases/reductases (SDR) family.

Increases biofilm dispersal. Acts by binding directly to the signaling molecule cyclic-di-GMP, which decreases the intracellular concentration of cyclic-di-GMP and leads to biofilm dispersal. Also controls other biofilm-related phenotypes such as cell motility, cell size, cell aggregation and production of extracellular DNA and extracellular polysaccharides (EPS). Does not act as a phosphodiesterase. The polypeptide is Cyclic-di-GMP-binding biofilm dispersal mediator protein (bdcA) (Escherichia coli (strain K12)).